Reading from the N-terminus, the 37-residue chain is Pi-theraphotoxin-Hm3a (37 aa).

3 disulfide bridges follow: Cys-3-Cys-18, Cys-10-Cys-23, and Cys-17-Cys-33.

This sequence belongs to the psalmotoxin-1 family. As to expression, expressed by the venom gland.

Its subcellular location is the secreted. Functionally, this toxin acts on different isoforms of acid-sensing ion channel ASIC1 in a similar manner to psalmotoxin-1 (AC P60514). On ASIC1a homotrimer, it provokes a pH-dependent inhibition (IC(50)=39.7 nM on human and IC(50)=1.3 nM on rat channels), whereas it potentiates ASIC1b homotrimer and ASIC1a-ASIC1b heterotrimer (EC(50)=178.1 nM on human ASIC1b, EC(50)=46.5 nM on rat ASIC1b and EC(50)=17.4 nM on rat ASIC1a-ASIC1b channels). On rat ASIC1a, it acts by inhibiting channel currents by shifting the pH of half-maximal effect (pH(50)) of steady-state desensitization and activation to more alkaline values. This is Pi-theraphotoxin-Hm3a from Heteroscodra maculata (Togo starburst tarantula).